The chain runs to 456 residues: Adenylyltransferase and sulfurtransferase uba4 (456 aa).

ATP is bound by residues G101, D122, 129-133 (SNLHR), K146, and 161-162 (DH). The Zn(2+) site is built by C210 and C213. Residue C227 is the Glycyl thioester intermediate; for adenylyltransferase activity of the active site. Positions 300 and 303 each coordinate Zn(2+). One can recognise a Rhodanese domain in the interval 350–454 (KEKEHLLIDV…WKEQVDGSWP (105 aa)). Residue C409 is the Cysteine persulfide intermediate; for sulfurtransferase activity of the active site.

In the N-terminal section; belongs to the HesA/MoeB/ThiF family. UBA4 subfamily. Zn(2+) serves as cofactor.

It localises to the cytoplasm. The protein localises to the cytosol. It carries out the reaction [molybdopterin-synthase sulfur-carrier protein]-C-terminal Gly-Gly + ATP + H(+) = [molybdopterin-synthase sulfur-carrier protein]-C-terminal Gly-Gly-AMP + diphosphate. The enzyme catalyses [molybdopterin-synthase sulfur-carrier protein]-C-terminal Gly-Gly-AMP + S-sulfanyl-L-cysteinyl-[cysteine desulfurase] + AH2 = [molybdopterin-synthase sulfur-carrier protein]-C-terminal-Gly-aminoethanethioate + L-cysteinyl-[cysteine desulfurase] + A + AMP + 2 H(+). It participates in tRNA modification; 5-methoxycarbonylmethyl-2-thiouridine-tRNA biosynthesis. Its function is as follows. Plays a central role in 2-thiolation of mcm(5)S(2)U at tRNA wobble positions of cytosolic tRNA(Lys), tRNA(Glu) and tRNA(Gln). Also essential during biosynthesis of the molybdenum cofactor. Acts by mediating the C-terminal thiocarboxylation of sulfur carriers urm1 and mocs2a. Its N-terminus first activates urm1 and mocs2a as acyl-adenylates (-COAMP), then the persulfide sulfur on the catalytic cysteine is transferred to urm1 and mocs2a to form thiocarboxylation (-COSH) of their C-terminus. The reaction probably involves hydrogen sulfide that is generated from the persulfide intermediate and that acts as a nucleophile towards urm1 and mocs2a. Subsequently, a transient disulfide bond is formed. Does not use thiosulfate as sulfur donor; nfs1 probably acting as a sulfur donor for thiocarboxylation reactions. This Sclerotinia sclerotiorum (strain ATCC 18683 / 1980 / Ss-1) (White mold) protein is Adenylyltransferase and sulfurtransferase uba4.